Here is a 432-residue protein sequence, read N- to C-terminus: Putative D-alanyl-D-alanine carboxypeptidase (432 aa).

The chain crosses the membrane as a helical; Signal-anchor span at residues 7–25; the sequence is ATVLLTFSLSAFAVEYPVL.

Belongs to the peptidase S12 family. YfeW subfamily.

Its subcellular location is the cell inner membrane. It carries out the reaction Preferential cleavage: (Ac)2-L-Lys-D-Ala-|-D-Ala. Also transpeptidation of peptidyl-alanyl moieties that are N-acyl substituents of D-alanine.. The sequence is that of Putative D-alanyl-D-alanine carboxypeptidase from Salmonella enteritidis PT4 (strain P125109).